The chain runs to 548 residues: 5-epi-aristolochene synthase 1 (548 aa).

Mg(2+)-binding residues include Asp301, Asp305, Asp444, Thr448, and Glu452. A DDXXD motif motif is present at residues 301-305 (DDTFD).

This sequence belongs to the terpene synthase family. As to quaternary structure, monomer. Requires Mg(2+) as cofactor. In terms of tissue distribution, expressed in roots, but not in shoots.

Its subcellular location is the cytoplasm. The enzyme catalyses (2E,6E)-farnesyl diphosphate = (+)-5-epi-aristolochene + diphosphate. It functions in the pathway secondary metabolite biosynthesis; terpenoid biosynthesis. Functionally, catalyzes the cyclization of trans,trans-farnesyl diphosphate (FPP) to the bicyclic intermediate 5-epi-aristolochene, initial step in the conversion of FPP to the sesquiterpenoid antifungal phytoalexin capsidiol. Produces germacrene A as an enzyme-bound intermediate that is not released by the enzyme, but is further cyclized to produce the bicyclic 5-epi-aristolochene. This Nicotiana attenuata (Coyote tobacco) protein is 5-epi-aristolochene synthase 1 (EAS).